The sequence spans 308 residues: Rhamnose-binding lectin (308 aa).

The first 23 residues, 1–23 (MMLILKLSLLSLLIATPGLLVSG), serve as a signal peptide directing secretion. SUEL-type lectin domains lie at 27–115 (ITCY…SFDC), 123–213 (ICEH…YICT), and 218–308 (VCEG…YACV). Asparagine 110 carries an N-linked (GlcNAc...) asparagine glycan.

Homotrimer. In terms of tissue distribution, expressed in eggs, but not in liver.

Its subcellular location is the secreted. Lectin that binds L-rhamnose. Also binds monosaccharides possessing steric similarity to the hydroxyl group orientation at C2 and C4 of the pyranose ring structure of L-rhamnose, such as L-mannose and L-lyxose. The protein is Rhamnose-binding lectin of Silurus asotus (Amur catfish).